Here is a 65-residue protein sequence, read N- to C-terminus: uncharacterized protein (65 aa).

This is an uncharacterized protein from Invertebrate iridescent virus 6 (IIV-6).